We begin with the raw amino-acid sequence, 291 residues long: Gamma-sarcoglycan (291 aa).

Residues 38–58 (LFVLLLLIVLLVNFALTIWIL) form a helical; Signal-anchor for type II membrane protein membrane-spanning segment. Topologically, residues 59 to 291 (RVMWFSPVGM…TCHEHSHLCL (233 aa)) are extracellular. N-linked (GlcNAc...) asparagine glycosylation occurs at asparagine 110. 2 disulfides stabilise this stretch: cysteine 265–cysteine 290 and cysteine 267–cysteine 283.

This sequence belongs to the sarcoglycan beta/delta/gamma/zeta family. In terms of assembly, interacts with the syntrophin SNTA1. Cross-link to form 2 major subcomplexes: one consisting of SGCB, SGCD and SGCG and the other consisting of SGCB and SGCD. The association between SGCB and SGCG is particularly strong while SGCA is loosely associated with the other sarcoglycans. Interacts with FLNC. Disulfide bonds are present.

The protein localises to the cell membrane. It localises to the sarcolemma. Its subcellular location is the cytoplasm. It is found in the cytoskeleton. Component of the sarcoglycan complex, a subcomplex of the dystrophin-glycoprotein complex which forms a link between the F-actin cytoskeleton and the extracellular matrix. This Bos taurus (Bovine) protein is Gamma-sarcoglycan (SGCG).